Consider the following 305-residue polypeptide: tRNA dimethylallyltransferase (305 aa).

8–15 (GPTAVGKT) serves as a coordination point for ATP. A substrate-binding site is contributed by 10–15 (TAVGKT). Residues 33–36 (DSRQ) form an interaction with substrate tRNA region.

It belongs to the IPP transferase family. Monomer. Mg(2+) is required as a cofactor.

The catalysed reaction is adenosine(37) in tRNA + dimethylallyl diphosphate = N(6)-dimethylallyladenosine(37) in tRNA + diphosphate. Functionally, catalyzes the transfer of a dimethylallyl group onto the adenine at position 37 in tRNAs that read codons beginning with uridine, leading to the formation of N6-(dimethylallyl)adenosine (i(6)A). This Thermotoga maritima (strain ATCC 43589 / DSM 3109 / JCM 10099 / NBRC 100826 / MSB8) protein is tRNA dimethylallyltransferase.